An 847-amino-acid chain; its full sequence is Cancer-associated gene 1 protein homolog (847 aa).

Positions 118-161 are disordered; the sequence is EEKPELQSQVYNDPADASQKPDPLKEESLMESSTSENKDELVHE. The stretch at 377–567 forms a coiled coil; the sequence is NVILEKNDIN…AAKREAQACT (191 aa).

The polypeptide is Cancer-associated gene 1 protein homolog (Cage1) (Rattus norvegicus (Rat)).